The sequence spans 292 residues: Protease HtpX homolog (292 aa).

The next 2 membrane-spanning stretches (helical) occupy residues 9–29 and 31–51; these read TGVLMAFLTGLLMAIGYVLGN and TGMMFAFMFALVMNFFSYWYS. His133 lines the Zn(2+) pocket. The active site involves Glu134. Residue His137 participates in Zn(2+) binding. Transmembrane regions (helical) follow at residues 148–168 and 185–205; these read LAAVMAGAIMMVARWAGWMLW and LGAILLIVLAPIAAMLIQMAI. Position 210 (Glu210) interacts with Zn(2+).

It belongs to the peptidase M48B family. Requires Zn(2+) as cofactor.

It localises to the cell membrane. The sequence is that of Protease HtpX homolog from Thermococcus sibiricus (strain DSM 12597 / MM 739).